A 290-amino-acid chain; its full sequence is Membrane protein insertase YidC (290 aa).

An N-terminal signal peptide occupies residues 1-19 (MKKKALLPLFLGIMVFLAG). A lipid anchor (N-palmitoyl cysteine) is attached at Cys20. A lipid anchor (S-diacylglycerol cysteine) is attached at Cys20. A run of 5 helical transmembrane segments spans residues 56-76 (YGLA…PFML), 134-154 (MLGC…YFVL), 176-196 (PDIW…YVSS), 207-224 (GYMM…ISLS), and 229-251 (LGLY…NIYY). The disordered stretch occupies residues 270-290 (HNGGSNKKGKNTQVVSKKKKK).

The protein belongs to the OXA1/ALB3/YidC family. Type 2 subfamily.

Its subcellular location is the cell membrane. Required for the insertion and/or proper folding and/or complex formation of integral membrane proteins into the membrane. Involved in integration of membrane proteins that insert both dependently and independently of the Sec translocase complex, as well as at least some lipoproteins. This Staphylococcus aureus (strain Mu3 / ATCC 700698) protein is Membrane protein insertase YidC.